Consider the following 546-residue polypeptide: Chaperonin GroEL 1 (546 aa).

Residues 30–33 (TLGP), Lys51, 87–91 (DGTTT), Gly415, 479–481 (NAA), and Asp495 each bind ATP. The interval 526 to 546 (KEDAPMPGGMPGGMGGMGMDM) is disordered. Residues 534–546 (GMPGGMGGMGMDM) are compositionally biased toward gly residues.

Belongs to the chaperonin (HSP60) family. As to quaternary structure, forms a cylinder of 14 subunits composed of two heptameric rings stacked back-to-back. Interacts with the co-chaperonin GroES.

Its subcellular location is the cytoplasm. The catalysed reaction is ATP + H2O + a folded polypeptide = ADP + phosphate + an unfolded polypeptide.. In terms of biological role, together with its co-chaperonin GroES, plays an essential role in assisting protein folding. The GroEL-GroES system forms a nano-cage that allows encapsulation of the non-native substrate proteins and provides a physical environment optimized to promote and accelerate protein folding. The protein is Chaperonin GroEL 1 of Burkholderia ambifaria (strain ATCC BAA-244 / DSM 16087 / CCUG 44356 / LMG 19182 / AMMD) (Burkholderia cepacia (strain AMMD)).